Reading from the N-terminus, the 394-residue chain is MSKEKFQRTKPHVNVGTIGHVDHGKTTLTAAITTVLAKAYGGSARAFDQIDNAPEEKARGITINTSHVEYDTPTRHYAHVDCPGHADYVKNMITGAAQMDGAILVVAATDGPMPQTREHILLGRQVGVPYIIVFMNKCDMVDDEELLELVEMEVRELLSQYDFPGDDTPVIRGSALKALEGDEAWTAKIIELAEALDSYIPEPERAIDKPFLLPIEDVFSISGRGTVVTGRVERGIVKVGEEVEIVGIKDTTKTTCTGVEMFRKLLDEGRAGENVGVLLRGTKRDDVERGQVLAKPGSIKPHTQFESEVYILSKDEGGRHTPFFKGYRPQFYFRTTDVTGTIELPEGVEMVMPGDNIKMVVNLIAPIAMDDGLRFAIREGGRTVGAGVVAKVIA.

The tr-type G domain maps to 10 to 204 (KPHVNVGTIG…ALDSYIPEPE (195 aa)). Residues 19–26 (GHVDHGKT) are G1. 19-26 (GHVDHGKT) contributes to the GTP binding site. A Mg(2+)-binding site is contributed by Thr26. A G2 region spans residues 60–64 (GITIN). A G3 region spans residues 81 to 84 (DCPG). GTP-binding positions include 81 to 85 (DCPGH) and 136 to 139 (NKCD). A G4 region spans residues 136-139 (NKCD). The tract at residues 174–176 (SAL) is G5.

It belongs to the TRAFAC class translation factor GTPase superfamily. Classic translation factor GTPase family. EF-Tu/EF-1A subfamily. As to quaternary structure, monomer.

It is found in the cytoplasm. It carries out the reaction GTP + H2O = GDP + phosphate + H(+). Functionally, GTP hydrolase that promotes the GTP-dependent binding of aminoacyl-tRNA to the A-site of ribosomes during protein biosynthesis. This chain is Elongation factor Tu, found in Sodalis glossinidius (strain morsitans).